The following is a 335-amino-acid chain: Ferrochelatase (335 aa).

Residues His-211 and Glu-290 each coordinate Fe cation.

This sequence belongs to the ferrochelatase family.

It localises to the cytoplasm. It catalyses the reaction heme b + 2 H(+) = protoporphyrin IX + Fe(2+). The protein operates within porphyrin-containing compound metabolism; protoheme biosynthesis; protoheme from protoporphyrin-IX: step 1/1. In terms of biological role, catalyzes the ferrous insertion into protoporphyrin IX. The sequence is that of Ferrochelatase from Sulfurihydrogenibium sp. (strain YO3AOP1).